The chain runs to 477 residues: Bifunctional enzyme PyrF/PyrE (477 aa).

Residues 1 to 273 (MIFFDKLHQN…ITVRDVASCS (273 aa)) are OMP decarboxylase. K96 serves as the catalytic Proton donor. Residues 274 to 477 (VWLPDVFTVK…DEQFLALTAE (204 aa)) are orotate phosphoribosyltransferase. Residues R374, K375, K378, H380, and 400–408 (DDILISGKS) each bind 5-phospho-alpha-D-ribose 1-diphosphate.

The protein in the N-terminal section; belongs to the OMP decarboxylase family. Type 2 subfamily. It in the C-terminal section; belongs to the purine/pyrimidine phosphoribosyltransferase family. Mg(2+) serves as cofactor.

It carries out the reaction orotidine 5'-phosphate + H(+) = UMP + CO2. The enzyme catalyses orotidine 5'-phosphate + diphosphate = orotate + 5-phospho-alpha-D-ribose 1-diphosphate. The protein operates within pyrimidine metabolism; UMP biosynthesis via de novo pathway; UMP from orotate: step 1/2. It participates in pyrimidine metabolism; UMP biosynthesis via de novo pathway; UMP from orotate: step 2/2. In terms of biological role, catalyzes the transfer of a ribosyl phosphate group from 5-phosphoribose 1-diphosphate to orotate, leading to the formation of orotidine monophosphate (OMP). Its function is as follows. Catalyzes the decarboxylation of orotidine monophosphate (OMP) to uridine monophosphate (UMP). The protein is Bifunctional enzyme PyrF/PyrE (pyrFE) of Nostoc sp. (strain PCC 7120 / SAG 25.82 / UTEX 2576).